Reading from the N-terminus, the 343-residue chain is S-adenosylmethionine:tRNA ribosyltransferase-isomerase (343 aa).

Belongs to the QueA family. In terms of assembly, monomer.

Its subcellular location is the cytoplasm. The enzyme catalyses 7-aminomethyl-7-carbaguanosine(34) in tRNA + S-adenosyl-L-methionine = epoxyqueuosine(34) in tRNA + adenine + L-methionine + 2 H(+). Its pathway is tRNA modification; tRNA-queuosine biosynthesis. Functionally, transfers and isomerizes the ribose moiety from AdoMet to the 7-aminomethyl group of 7-deazaguanine (preQ1-tRNA) to give epoxyqueuosine (oQ-tRNA). In Geobacter sulfurreducens (strain ATCC 51573 / DSM 12127 / PCA), this protein is S-adenosylmethionine:tRNA ribosyltransferase-isomerase.